Reading from the N-terminus, the 298-residue chain is 4-hydroxy-tetrahydrodipicolinate synthase (298 aa).

Position 51 (T51) interacts with pyruvate. Y139 functions as the Proton donor/acceptor in the catalytic mechanism. K167 (schiff-base intermediate with substrate) is an active-site residue. I209 contributes to the pyruvate binding site.

This sequence belongs to the DapA family. In terms of assembly, homotetramer; dimer of dimers.

The protein resides in the cytoplasm. It catalyses the reaction L-aspartate 4-semialdehyde + pyruvate = (2S,4S)-4-hydroxy-2,3,4,5-tetrahydrodipicolinate + H2O + H(+). Its pathway is amino-acid biosynthesis; L-lysine biosynthesis via DAP pathway; (S)-tetrahydrodipicolinate from L-aspartate: step 3/4. In terms of biological role, catalyzes the condensation of (S)-aspartate-beta-semialdehyde [(S)-ASA] and pyruvate to 4-hydroxy-tetrahydrodipicolinate (HTPA). In Histophilus somni (strain 2336) (Haemophilus somnus), this protein is 4-hydroxy-tetrahydrodipicolinate synthase.